The chain runs to 236 residues: Phosphoribosylaminoimidazole-succinocarboxamide synthase (236 aa).

Belongs to the SAICAR synthetase family.

The enzyme catalyses 5-amino-1-(5-phospho-D-ribosyl)imidazole-4-carboxylate + L-aspartate + ATP = (2S)-2-[5-amino-1-(5-phospho-beta-D-ribosyl)imidazole-4-carboxamido]succinate + ADP + phosphate + 2 H(+). It functions in the pathway purine metabolism; IMP biosynthesis via de novo pathway; 5-amino-1-(5-phospho-D-ribosyl)imidazole-4-carboxamide from 5-amino-1-(5-phospho-D-ribosyl)imidazole-4-carboxylate: step 1/2. This is Phosphoribosylaminoimidazole-succinocarboxamide synthase from Campylobacter curvus (strain 525.92).